The primary structure comprises 831 residues: DNA ligase (831 aa).

NAD(+) is bound by residues D34–D38, S83–L84, and E114. K116 functions as the N6-AMP-lysine intermediate in the catalytic mechanism. R137, E174, K291, and K315 together coordinate NAD(+). 4 residues coordinate Zn(2+): C409, C412, C427, and C433. Positions A749 to Q831 constitute a BRCT domain.

The protein belongs to the NAD-dependent DNA ligase family. LigA subfamily. Mg(2+) is required as a cofactor. It depends on Mn(2+) as a cofactor.

It carries out the reaction NAD(+) + (deoxyribonucleotide)n-3'-hydroxyl + 5'-phospho-(deoxyribonucleotide)m = (deoxyribonucleotide)n+m + AMP + beta-nicotinamide D-nucleotide.. In terms of biological role, DNA ligase that catalyzes the formation of phosphodiester linkages between 5'-phosphoryl and 3'-hydroxyl groups in double-stranded DNA using NAD as a coenzyme and as the energy source for the reaction. It is essential for DNA replication and repair of damaged DNA. This Xylella fastidiosa (strain M12) protein is DNA ligase.